A 59-amino-acid polypeptide reads, in one-letter code: Movement protein TGBp3 (59 aa).

The Lumenal segment spans residues 1 to 3 (MHL). The chain crosses the membrane as a helical span at residues 4-21 (AIVGALTLVLTLFVLHYT). At 22 to 59 (TKDDRCYILINGHSAFTNCPASPDLAKVISQLKPHNHG) the chain is on the cytoplasmic side.

This sequence belongs to the Tymovirales TGBp3 protein family.

It is found in the host endoplasmic reticulum membrane. In terms of biological role, plays a role in viral cell-to-cell propagation, by facilitating genome transport to neighboring plant cells through plasmosdesmata. May induce the formation of granular vesicles derived from the Endoplasmic reticulum, which align on actin filaments. The protein is Movement protein TGBp3 of Chenopodium album (Fat hen).